The chain runs to 134 residues: uncharacterized protein (134 aa).

In terms of domain architecture, HTH tetR-type spans 10 to 70 (KETRQRIIDA…AVLASRQHPL (61 aa)). Residues 33 to 52 (TLDQIARKAGVTRGAVYWHF) constitute a DNA-binding region (H-T-H motif).

Its function is as follows. Unknown, does not seem to be involved in regulation of the ttgGHI or ttgVW operons. This is an uncharacterized protein from Pseudomonas putida (strain DOT-T1E).